Reading from the N-terminus, the 776-residue chain is DExH-box ATP-dependent RNA helicase DExH18, mitochondrial (776 aa).

A mitochondrion-targeting transit peptide spans Met-1–Asn-84. Residues Thr-80–Tyr-101 form a disordered region. Acidic residues predominate over residues Gly-85–Tyr-101. Positions Phe-268–Lys-426 constitute a Helicase ATP-binding domain. Gly-281–Thr-288 contacts ATP. The DEIH box; degenerate signature appears at Asp-361–Gln-364. In terms of domain architecture, Helicase C-terminal spans Thr-427–Ala-595.

This sequence belongs to the DExH box helicase family. As to quaternary structure, homodimer; in free form. Component of the mitochondrial degradosome (mtEXO) complex which is a heteropentamer containing 2 copies of SUPV3L1 and 3 copies of PNPT1. Mg(2+) serves as cofactor. It depends on Mn(2+) as a cofactor.

The protein resides in the nucleus. Its subcellular location is the mitochondrion matrix. The protein localises to the mitochondrion nucleoid. The enzyme catalyses ATP + H2O = ADP + phosphate + H(+). In terms of biological role, major helicase player in mitochondrial RNA metabolism. Component of the mitochondrial degradosome (mtEXO) complex, that degrades 3' overhang double-stranded RNA with a 3'-to-5' directionality in an ATP-dependent manner. ATPase and ATP-dependent multisubstrate helicase, able to unwind double-stranded (ds) DNA and RNA, and RNA/DNA heteroduplexes in the 5'-to-3' direction. Plays a role in the RNA surveillance system in mitochondria; regulates the stability of mature mRNAs, the removal of aberrantly formed mRNAs and the rapid degradation of non coding processing intermediates. The chain is DExH-box ATP-dependent RNA helicase DExH18, mitochondrial from Arabidopsis thaliana (Mouse-ear cress).